Reading from the N-terminus, the 224-residue chain is MADS-box transcription factor 16 (224 aa).

One can recognise an MADS-box domain in the interval 1 to 61 (MGRGKIEIKR…GKYHEFCSPS (61 aa)). One can recognise a K-box domain in the interval 84 to 174 (YENMQRTLSH…QQELGLREEP (91 aa)).

In terms of assembly, may interact with the K-box of MADS4, MADS6 and MADS8. May form a heterodimer with MADS4. Expressed in lodicules, stamens and carpels.

It is found in the nucleus. In terms of biological role, probable transcription factor involved in the development of floral organs. Required for normal development of lodicules and stamens (whorls 2 and 3). May function as a heterodimer with MADS4. The sequence is that of MADS-box transcription factor 16 (MADS16) from Oryza sativa subsp. japonica (Rice).